We begin with the raw amino-acid sequence, 122 residues long: Large ribosomal subunit protein uL14 (122 aa).

This sequence belongs to the universal ribosomal protein uL14 family. Part of the 50S ribosomal subunit. Forms a cluster with proteins L3 and L19. In the 70S ribosome, L14 and L19 interact and together make contacts with the 16S rRNA in bridges B5 and B8.

Binds to 23S rRNA. Forms part of two intersubunit bridges in the 70S ribosome. This Bacillus pumilus (strain SAFR-032) protein is Large ribosomal subunit protein uL14.